The following is a 325-amino-acid chain: Probable serine/threonine-protein phosphatase 2A activator 1 (325 aa).

It belongs to the PTPA-type PPIase family.

Its subcellular location is the cytoplasm. The catalysed reaction is [protein]-peptidylproline (omega=180) = [protein]-peptidylproline (omega=0). Its function is as follows. PPIases accelerate the folding of proteins. It catalyzes the cis-trans isomerization of proline imidic peptide bonds in oligopeptides. Acts as a regulatory subunit for PP2A-like phosphatases modulating their activity or substrate specificity, probably by inducing a conformational change in the catalytic subunit, a direct target of the PPIase. This Dictyostelium discoideum (Social amoeba) protein is Probable serine/threonine-protein phosphatase 2A activator 1 (ppp2r4A).